Reading from the N-terminus, the 393-residue chain is NAD(P)H-quinone oxidoreductase subunit H, chloroplastic (393 aa).

It belongs to the complex I 49 kDa subunit family. As to quaternary structure, NDH is composed of at least 16 different subunits, 5 of which are encoded in the nucleus.

It is found in the plastid. The protein resides in the chloroplast thylakoid membrane. The enzyme catalyses a plastoquinone + NADH + (n+1) H(+)(in) = a plastoquinol + NAD(+) + n H(+)(out). It carries out the reaction a plastoquinone + NADPH + (n+1) H(+)(in) = a plastoquinol + NADP(+) + n H(+)(out). Functionally, NDH shuttles electrons from NAD(P)H:plastoquinone, via FMN and iron-sulfur (Fe-S) centers, to quinones in the photosynthetic chain and possibly in a chloroplast respiratory chain. The immediate electron acceptor for the enzyme in this species is believed to be plastoquinone. Couples the redox reaction to proton translocation, and thus conserves the redox energy in a proton gradient. In Drimys granadensis, this protein is NAD(P)H-quinone oxidoreductase subunit H, chloroplastic.